The primary structure comprises 125 residues: Small ribosomal subunit protein uS12 (125 aa).

A disordered region spans residues 1-23 (MATVNQLVRKGRTKRTAKSSVPA). The residue at position 89 (Asp-89) is a 3-methylthioaspartic acid. Residues 102 to 125 (ADTAGVDKRRQGRSKYGAKRPKKK) form a disordered region. The span at 111–125 (RQGRSKYGAKRPKKK) shows a compositional bias: basic residues.

Belongs to the universal ribosomal protein uS12 family. As to quaternary structure, part of the 30S ribosomal subunit. Contacts proteins S8 and S17. May interact with IF1 in the 30S initiation complex.

In terms of biological role, with S4 and S5 plays an important role in translational accuracy. Functionally, interacts with and stabilizes bases of the 16S rRNA that are involved in tRNA selection in the A site and with the mRNA backbone. Located at the interface of the 30S and 50S subunits, it traverses the body of the 30S subunit contacting proteins on the other side and probably holding the rRNA structure together. The combined cluster of proteins S8, S12 and S17 appears to hold together the shoulder and platform of the 30S subunit. The protein is Small ribosomal subunit protein uS12 of Halorhodospira halophila (strain DSM 244 / SL1) (Ectothiorhodospira halophila (strain DSM 244 / SL1)).